We begin with the raw amino-acid sequence, 166 residues long: MLRGVLGKAFRLAGYTIQYGCIAHCAFEYVGGVVMCSGPSMEPTIQNSDIVFAENLSRHFYGIQRGDIVIAKSPSDPKSNICKRVIGLEGDKILSTSPSDVFKSRSYVPTGHVWLEGDNLQNSTDSRYYGPIPYGLIRGRIFFKIWPFSDFGFLRDSPNGQRFSDD.

Catalysis depends on residues Ser40 and Lys83.

This sequence belongs to the peptidase S26 family. IMP1 subfamily. In terms of assembly, heterodimer of 2 subunits, IMMPL1 and IMMPL2.

Its subcellular location is the mitochondrion inner membrane. In terms of biological role, catalyzes the removal of transit peptides required for the targeting of proteins from the mitochondrial matrix, across the inner membrane, into the inter-membrane space. Known to process the nuclear encoded protein DIABLO. The polypeptide is Mitochondrial inner membrane protease subunit 1 (Immp1l) (Mus musculus (Mouse)).